A 492-amino-acid chain; its full sequence is Catalase isozyme 1 (492 aa).

Active-site residues include His-65 and Asn-138. Tyr-348 provides a ligand contact to heme.

This sequence belongs to the catalase family. As to quaternary structure, homotetramer. Requires heme as cofactor. In terms of tissue distribution, in whole endosperms (aleurones plus starchy endosperm), in isolated aleurones and in developing seeds.

It is found in the peroxisome. It localises to the glyoxysome. It carries out the reaction 2 H2O2 = O2 + 2 H2O. In terms of biological role, occurs in almost all aerobically respiring organisms and serves to protect cells from the toxic effects of hydrogen peroxide. The chain is Catalase isozyme 1 (CAT1) from Hordeum vulgare (Barley).